The following is a 398-amino-acid chain: Na(+)/H(+) antiporter NhaA (398 aa).

The next 11 helical transmembrane spans lie at 19–39, 64–84, 99–119, 130–150, 159–179, 182–202, 222–242, 266–286, 299–319, 337–357, and 370–390; these read IGGI…NSPG, LLLW…GLEL, IILP…IYLA, GWAI…SLLG, ILLT…IACF, NDIY…LFIV, IAML…AMFI, ATFI…LTNI, IALG…WVGV, GMSA…SLAF, and LGII…LNKT.

This sequence belongs to the NhaA Na(+)/H(+) (TC 2.A.33) antiporter family.

It localises to the cell inner membrane. The catalysed reaction is Na(+)(in) + 2 H(+)(out) = Na(+)(out) + 2 H(+)(in). Na(+)/H(+) antiporter that extrudes sodium in exchange for external protons. This chain is Na(+)/H(+) antiporter NhaA, found in Desulfotalea psychrophila (strain LSv54 / DSM 12343).